A 497-amino-acid chain; its full sequence is 4,4'-diapolycopene oxygenase (497 aa).

The protein belongs to the carotenoid/retinoid oxidoreductase family. FAD serves as cofactor.

It carries out the reaction all-trans-4,4'-diapolycopene + 4 AH2 + 4 O2 = all-trans-4,4'-diapolycopene-4,4'-dial + 4 A + 6 H2O. It catalyses the reaction all-trans-4,4'-diaponeurosporene + 2 AH2 + 2 O2 = 4,4'-diaponeurosporenal + 2 A + 3 H2O. Its pathway is carotenoid biosynthesis. Functionally, involved in the biosynthesis of C30 carotenoids. Catalyzes the oxidation of the terminal methyl side groups of 4,4'-diapolycopene to yield 4,4'-diapolycopen-4,4'-dial via the aldehyde intermediate 4,4'-diapolycopen-al. Also able to catalyze the oxidation of the terminal methyl side group of 4,4'-diaponeurosporene to form 4,4'-diaponeurosporen-4-al. It has moderate to low activity on the C40 substrates neurosporene and lycopene, and has no detectable activity on zeta-carotene or beta-carotene. The polypeptide is 4,4'-diapolycopene oxygenase (Methylomonas sp).